The sequence spans 159 residues: NADH-quinone oxidoreductase subunit B (159 aa).

The [4Fe-4S] cluster site is built by Cys32, Cys33, Cys97, and Cys126.

This sequence belongs to the complex I 20 kDa subunit family. As to quaternary structure, NDH-1 is composed of 14 different subunits. Subunits NuoB, C, D, E, F, and G constitute the peripheral sector of the complex. The cofactor is [4Fe-4S] cluster.

Its subcellular location is the cell inner membrane. The enzyme catalyses a quinone + NADH + 5 H(+)(in) = a quinol + NAD(+) + 4 H(+)(out). Its function is as follows. NDH-1 shuttles electrons from NADH, via FMN and iron-sulfur (Fe-S) centers, to quinones in the respiratory chain. The immediate electron acceptor for the enzyme in this species is believed to be ubiquinone. Couples the redox reaction to proton translocation (for every two electrons transferred, four hydrogen ions are translocated across the cytoplasmic membrane), and thus conserves the redox energy in a proton gradient. The chain is NADH-quinone oxidoreductase subunit B from Helicobacter pylori (strain P12).